The chain runs to 412 residues: BSD domain-containing protein 1 (412 aa).

The 53-residue stretch at 145 to 197 (WLSTFSLEERKAEISELLVSSPAIRALYTKMVPAAVAHAEFWQRYFYKVFQLE) folds into the BSD domain. The segment covering 208-217 (QRAEQTDHSE) has biased composition (basic and acidic residues). Disordered regions lie at residues 208–227 (QRAE…EDEE), 253–272 (VTVA…ASLS), and 298–412 (ESVT…ENWE). Composition is skewed to polar residues over residues 259-272 (PESS…ASLS) and 298-308 (ESVTIRVTQPS). A Phosphoserine modification is found at Ser308. Residues 328–349 (PEERPAPREETAREDMAQDLRV) show a composition bias toward basic and acidic residues. Over residues 353-372 (NSDSGKSTPSNNGKKGSSTD) the composition is skewed to polar residues. 2 stretches are compositionally biased toward acidic residues: residues 373–390 (VSED…EEEV) and 400–412 (TEEL…ENWE).

The polypeptide is BSD domain-containing protein 1 (bsdc1) (Danio rerio (Zebrafish)).